Reading from the N-terminus, the 108-residue chain is Replication restart protein PriB (108 aa).

An SSB domain is found at 11 to 108 (INRNQVIISG…VLHVRDTRII (98 aa)).

Belongs to the PriB family. In terms of assembly, homodimer. Interacts with PriA and DnaT. Component of the replication restart primosome. Primosome assembly occurs via a 'hand-off' mechanism. PriA binds to replication forks, subsequently PriB then DnaT bind; DnaT then displaces ssDNA to generate the helicase loading substrate.

Its function is as follows. Involved in the restart of stalled replication forks, which reloads the replicative helicase on sites other than the origin of replication; the PriA-PriB pathway is the major replication restart pathway. During primosome assembly it facilitates complex formation between PriA and DnaT on DNA; stabilizes PriA on DNA. Stimulates the DNA unwinding activity of PriA helicase. The polypeptide is Replication restart protein PriB (Nitrosomonas europaea (strain ATCC 19718 / CIP 103999 / KCTC 2705 / NBRC 14298)).